Consider the following 118-residue polypeptide: HTH-type transcriptional regulator SarT (118 aa).

The H-T-H motif DNA-binding region spans 55-78 (MRDIISYIGIDQSRIVKSVKDLSK).

This sequence belongs to the SarA family.

It is found in the cytoplasm. Its function is as follows. Transcriptional regulator acting as an intermediary between major regulators sarA and agr and virulence genes. Represses alpha-hemolysin (hla) gene expression. Down-regulates agr RNAIII expression by repressing sarU, a positive activator of agr expression. Up-regulates sarS, which induces the expression of the cell wall-associated protein A (spa). The polypeptide is HTH-type transcriptional regulator SarT (sarT) (Staphylococcus aureus (strain NCTC 8325 / PS 47)).